The sequence spans 275 residues: 3-methyl-2-oxobutanoate hydroxymethyltransferase (275 aa).

Positions 49 and 88 each coordinate Mg(2+). 3-methyl-2-oxobutanoate-binding positions include 49–50 (DS), aspartate 88, and lysine 118. Residue glutamate 120 participates in Mg(2+) binding. Glutamate 187 functions as the Proton acceptor in the catalytic mechanism.

The protein belongs to the PanB family. Homodecamer; pentamer of dimers. The cofactor is Mg(2+).

It localises to the cytoplasm. It catalyses the reaction 3-methyl-2-oxobutanoate + (6R)-5,10-methylene-5,6,7,8-tetrahydrofolate + H2O = 2-dehydropantoate + (6S)-5,6,7,8-tetrahydrofolate. Its pathway is cofactor biosynthesis; (R)-pantothenate biosynthesis; (R)-pantoate from 3-methyl-2-oxobutanoate: step 1/2. Its function is as follows. Catalyzes the reversible reaction in which hydroxymethyl group from 5,10-methylenetetrahydrofolate is transferred onto alpha-ketoisovalerate to form ketopantoate. The protein is 3-methyl-2-oxobutanoate hydroxymethyltransferase of Bartonella henselae (strain ATCC 49882 / DSM 28221 / CCUG 30454 / Houston 1) (Rochalimaea henselae).